A 1227-amino-acid polypeptide reads, in one-letter code: Pre-mRNA-splicing factor ATP-dependent RNA helicase PRP16 (1227 aa).

The residue at position 2 (G2) is an N-acetylglycine. Position 56 is a phosphoserine (S56). Residues 60 to 89 (REREEKDDGEDKKKSKVSSYKDWEESKDDQ) are compositionally biased toward basic and acidic residues. The tract at residues 60–320 (REREEKDDGE…ERQQWEDDQR (261 aa)) is disordered. At T117 the chain carries Phosphothreonine. The segment covering 128–201 (FWERSRQRER…SRRNEPESPR (74 aa)) has biased composition (basic and acidic residues). Residues S199 and S224 each carry the phosphoserine modification. Residues 222–239 (YGSSRRSQWESPSPTPSY) show a composition bias toward polar residues. Residues 240 to 263 (RDSERSHRLSTRDRDRSVRGKYSD) are compositionally biased toward basic and acidic residues. Position 260 is an N6-acetyllysine (K260). Acidic residues predominate over residues 300 to 310 (GEEGISFDTEE). Over residues 311 to 320 (ERQQWEDDQR) the composition is skewed to basic and acidic residues. Residues K482, K483, and K504 each participate in a glycyl lysine isopeptide (Lys-Gly) (interchain with G-Cter in SUMO2) cross-link. The region spanning 542–705 (LTIIRDNSIV…FGNVPIFHIP (164 aa)) is the Helicase ATP-binding domain. 555 to 562 (GETGSGKT) is an ATP binding site. The DEAH box motif lies at 652–655 (DEAH). One can recognise a Helicase C-terminal domain in the interval 727–902 (AVKQSLQVHL…NVVLLLKSLG (176 aa)). Residues 1155–1227 (GKSRQENRRR…PRRTPARFGL (73 aa)) are disordered. 2 stretches are compositionally biased toward basic and acidic residues: residues 1157 to 1169 (SRQE…KEEA) and 1181 to 1194 (EQLR…EKRS). A Glycyl lysine isopeptide (Lys-Gly) (interchain with G-Cter in SUMO2) cross-link involves residue K1166. Phosphoserine is present on S1194.

This sequence belongs to the DEAD box helicase family. DEAH subfamily. PRP16 sub-subfamily. In terms of assembly, identified in the spliceosome C complex.

It is found in the nucleus. The enzyme catalyses ATP + H2O = ADP + phosphate + H(+). Its function is as follows. Probable ATP-binding RNA helicase. Involved in pre-mRNA splicing as component of the spliceosome. In Homo sapiens (Human), this protein is Pre-mRNA-splicing factor ATP-dependent RNA helicase PRP16 (DHX38).